A 140-amino-acid chain; its full sequence is ATP synthase epsilon chain (140 aa).

The protein belongs to the ATPase epsilon chain family. F-type ATPases have 2 components, CF(1) - the catalytic core - and CF(0) - the membrane proton channel. CF(1) has five subunits: alpha(3), beta(3), gamma(1), delta(1), epsilon(1). CF(0) has three main subunits: a, b and c.

It localises to the cell inner membrane. In terms of biological role, produces ATP from ADP in the presence of a proton gradient across the membrane. In Colwellia maris, this protein is ATP synthase epsilon chain.